The sequence spans 158 residues: Transcription elongation factor GreA (158 aa).

Residues 45–72 (AEYHAAREQQSFIEGRIKQLEGELSHAE) are a coiled coil.

The protein belongs to the GreA/GreB family.

Necessary for efficient RNA polymerase transcription elongation past template-encoded arresting sites. The arresting sites in DNA have the property of trapping a certain fraction of elongating RNA polymerases that pass through, resulting in locked ternary complexes. Cleavage of the nascent transcript by cleavage factors such as GreA or GreB allows the resumption of elongation from the new 3'terminus. GreA releases sequences of 2 to 3 nucleotides. In Xanthomonas campestris pv. campestris (strain ATCC 33913 / DSM 3586 / NCPPB 528 / LMG 568 / P 25), this protein is Transcription elongation factor GreA.